A 408-amino-acid polypeptide reads, in one-letter code: LL-diaminopimelate aminotransferase (408 aa).

Residues tyrosine 15 and glycine 42 each coordinate substrate. Residues tyrosine 72, 108-109 (SK), tyrosine 132, asparagine 187, tyrosine 218, and 246-248 (SFS) contribute to the pyridoxal 5'-phosphate site. Substrate-binding residues include lysine 109, tyrosine 132, and asparagine 187. Lysine 249 carries the post-translational modification N6-(pyridoxal phosphate)lysine. Residues arginine 257 and asparagine 292 each contribute to the pyridoxal 5'-phosphate site. Residues asparagine 292 and arginine 388 each contribute to the substrate site.

This sequence belongs to the class-I pyridoxal-phosphate-dependent aminotransferase family. LL-diaminopimelate aminotransferase subfamily. Homodimer. Pyridoxal 5'-phosphate is required as a cofactor.

It catalyses the reaction (2S,6S)-2,6-diaminopimelate + 2-oxoglutarate = (S)-2,3,4,5-tetrahydrodipicolinate + L-glutamate + H2O + H(+). Its pathway is amino-acid biosynthesis; L-lysine biosynthesis via DAP pathway; LL-2,6-diaminopimelate from (S)-tetrahydrodipicolinate (aminotransferase route): step 1/1. Functionally, involved in the synthesis of meso-diaminopimelate (m-DAP or DL-DAP), required for both lysine and peptidoglycan biosynthesis. Catalyzes the direct conversion of tetrahydrodipicolinate to LL-diaminopimelate. This Synechococcus sp. (strain CC9311) protein is LL-diaminopimelate aminotransferase.